The sequence spans 450 residues: ATP-dependent protease ATPase subunit HslU (450 aa).

ATP-binding positions include Val-29, 71–76, Asp-261, Glu-328, and Arg-400; that span reads GVGKTE.

This sequence belongs to the ClpX chaperone family. HslU subfamily. As to quaternary structure, a double ring-shaped homohexamer of HslV is capped on each side by a ring-shaped HslU homohexamer. The assembly of the HslU/HslV complex is dependent on binding of ATP.

It is found in the cytoplasm. In terms of biological role, ATPase subunit of a proteasome-like degradation complex; this subunit has chaperone activity. The binding of ATP and its subsequent hydrolysis by HslU are essential for unfolding of protein substrates subsequently hydrolyzed by HslV. HslU recognizes the N-terminal part of its protein substrates and unfolds these before they are guided to HslV for hydrolysis. This is ATP-dependent protease ATPase subunit HslU from Rickettsia canadensis (strain McKiel).